The primary structure comprises 356 residues: UDP-N-acetylglucosamine--N-acetylmuramyl-(pentapeptide) pyrophosphoryl-undecaprenol N-acetylglucosamine transferase (356 aa).

Serine 198 and glutamine 289 together coordinate UDP-N-acetyl-alpha-D-glucosamine.

The protein belongs to the glycosyltransferase 28 family. MurG subfamily.

It localises to the cell membrane. The enzyme catalyses Mur2Ac(oyl-L-Ala-gamma-D-Glu-L-Lys-D-Ala-D-Ala)-di-trans,octa-cis-undecaprenyl diphosphate + UDP-N-acetyl-alpha-D-glucosamine = beta-D-GlcNAc-(1-&gt;4)-Mur2Ac(oyl-L-Ala-gamma-D-Glu-L-Lys-D-Ala-D-Ala)-di-trans,octa-cis-undecaprenyl diphosphate + UDP + H(+). The protein operates within cell wall biogenesis; peptidoglycan biosynthesis. Its function is as follows. Cell wall formation. Catalyzes the transfer of a GlcNAc subunit on undecaprenyl-pyrophosphoryl-MurNAc-pentapeptide (lipid intermediate I) to form undecaprenyl-pyrophosphoryl-MurNAc-(pentapeptide)GlcNAc (lipid intermediate II). In Streptococcus thermophilus (strain ATCC BAA-491 / LMD-9), this protein is UDP-N-acetylglucosamine--N-acetylmuramyl-(pentapeptide) pyrophosphoryl-undecaprenol N-acetylglucosamine transferase.